We begin with the raw amino-acid sequence, 170 residues long: Peptide methionine sulfoxide reductase MsrA (170 aa).

The active site involves cysteine 14.

The protein belongs to the MsrA Met sulfoxide reductase family.

The enzyme catalyses L-methionyl-[protein] + [thioredoxin]-disulfide + H2O = L-methionyl-(S)-S-oxide-[protein] + [thioredoxin]-dithiol. It carries out the reaction [thioredoxin]-disulfide + L-methionine + H2O = L-methionine (S)-S-oxide + [thioredoxin]-dithiol. Its function is as follows. Has an important function as a repair enzyme for proteins that have been inactivated by oxidation. Catalyzes the reversible oxidation-reduction of methionine sulfoxide in proteins to methionine. The polypeptide is Peptide methionine sulfoxide reductase MsrA (Streptomyces avermitilis (strain ATCC 31267 / DSM 46492 / JCM 5070 / NBRC 14893 / NCIMB 12804 / NRRL 8165 / MA-4680)).